A 266-amino-acid chain; its full sequence is Glucosamine-6-phosphate deaminase (266 aa).

Asp-72 acts as the Proton acceptor; for enolization step in catalysis. Asp-141 functions as the For ring-opening step in the catalytic mechanism. The active-site Proton acceptor; for ring-opening step is His-143. Residue Glu-148 is the For ring-opening step of the active site.

The protein belongs to the glucosamine/galactosamine-6-phosphate isomerase family. NagB subfamily. In terms of assembly, homohexamer.

It carries out the reaction alpha-D-glucosamine 6-phosphate + H2O = beta-D-fructose 6-phosphate + NH4(+). The protein operates within amino-sugar metabolism; N-acetylneuraminate degradation; D-fructose 6-phosphate from N-acetylneuraminate: step 5/5. Allosterically activated by N-acetylglucosamine 6-phosphate (GlcNAc6P). Its function is as follows. Catalyzes the reversible isomerization-deamination of glucosamine 6-phosphate (GlcN6P) to form fructose 6-phosphate (Fru6P) and ammonium ion. The sequence is that of Glucosamine-6-phosphate deaminase from Yersinia pestis bv. Antiqua (strain Antiqua).